A 346-amino-acid chain; its full sequence is Deoxyhypusine hydroxylase (346 aa).

5 HEAT-like PBS-type repeats span residues 71–100 (VLLR…LNDT), 104–133 (LMVR…LNDE), 213–242 (LKLR…LIKD), 246–275 (AIFR…LQNV), and 279–320 (EMVR…SKDA). His-75, His-108, and Glu-109 together coordinate Fe cation. Fe cation is bound by residues His-250, His-283, and Glu-284.

This sequence belongs to the deoxyhypusine hydroxylase family. Fe(2+) is required as a cofactor.

It carries out the reaction [eIF5A protein]-deoxyhypusine + AH2 + O2 = [eIF5A protein]-hypusine + A + H2O. The protein operates within protein modification; eIF5A hypusination. Its function is as follows. Catalyzes the hydroxylation of the N(6)-(4-aminobutyl)-L-lysine intermediate produced by deoxyhypusine synthase/DHPS on a critical lysine of the eukaryotic translation initiation factor 5A/eIF-5A. This is the second step of the post-translational modification of that lysine into an unusual amino acid residue named hypusine. Hypusination is unique to mature eIF-5A factor and is essential for its function. The protein is Deoxyhypusine hydroxylase of Plasmodium vivax (strain Salvador I).